The sequence spans 277 residues: NH(3)-dependent NAD(+) synthetase (277 aa).

Gly-47 to Ser-54 is a binding site for ATP. A Mg(2+)-binding site is contributed by Asp-53. Deamido-NAD(+) is bound at residue Arg-141. Thr-161 lines the ATP pocket. A Mg(2+)-binding site is contributed by Glu-166. Lys-174 and Asp-181 together coordinate deamido-NAD(+). The ATP site is built by Lys-190 and Thr-212. His-261–Lys-262 lines the deamido-NAD(+) pocket.

This sequence belongs to the NAD synthetase family. In terms of assembly, homodimer.

It carries out the reaction deamido-NAD(+) + NH4(+) + ATP = AMP + diphosphate + NAD(+) + H(+). The protein operates within cofactor biosynthesis; NAD(+) biosynthesis; NAD(+) from deamido-NAD(+) (ammonia route): step 1/1. Catalyzes the ATP-dependent amidation of deamido-NAD to form NAD. Uses ammonia as a nitrogen source. This is NH(3)-dependent NAD(+) synthetase from Lactobacillus gasseri (strain ATCC 33323 / DSM 20243 / BCRC 14619 / CIP 102991 / JCM 1131 / KCTC 3163 / NCIMB 11718 / NCTC 13722 / AM63).